The chain runs to 367 residues: Phosphoribosylaminoimidazole-succinocarboxamide synthase (367 aa).

It belongs to the SAICAR synthetase family.

It catalyses the reaction 5-amino-1-(5-phospho-D-ribosyl)imidazole-4-carboxylate + L-aspartate + ATP = (2S)-2-[5-amino-1-(5-phospho-beta-D-ribosyl)imidazole-4-carboxamido]succinate + ADP + phosphate + 2 H(+). The protein operates within purine metabolism; IMP biosynthesis via de novo pathway; 5-amino-1-(5-phospho-D-ribosyl)imidazole-4-carboxamide from 5-amino-1-(5-phospho-D-ribosyl)imidazole-4-carboxylate: step 1/2. The chain is Phosphoribosylaminoimidazole-succinocarboxamide synthase from Shewanella halifaxensis (strain HAW-EB4).